An 85-amino-acid chain; its full sequence is uncharacterized protein (85 aa).

The protein belongs to the YciI family.

This is an uncharacterized protein from Bacillus subtilis (strain 168).